A 276-amino-acid polypeptide reads, in one-letter code: Undecaprenyl-diphosphatase (276 aa).

The next 6 helical transmembrane spans lie at Arg-43–Phe-63, Ala-85–Ile-105, Leu-109–Ala-129, Ala-183–Ser-203, Ser-214–Val-234, and Phe-249–Val-269.

This sequence belongs to the UppP family.

Its subcellular location is the cell inner membrane. It carries out the reaction di-trans,octa-cis-undecaprenyl diphosphate + H2O = di-trans,octa-cis-undecaprenyl phosphate + phosphate + H(+). Catalyzes the dephosphorylation of undecaprenyl diphosphate (UPP). Confers resistance to bacitracin. The polypeptide is Undecaprenyl-diphosphatase (Pseudomonas putida (strain W619)).